The following is a 127-amino-acid chain: Small ribosomal subunit protein uS11 (127 aa).

It belongs to the universal ribosomal protein uS11 family. In terms of assembly, part of the 30S ribosomal subunit. Interacts with proteins S7 and S18. Binds to IF-3.

In terms of biological role, located on the platform of the 30S subunit, it bridges several disparate RNA helices of the 16S rRNA. Forms part of the Shine-Dalgarno cleft in the 70S ribosome. In Rickettsia bellii (strain RML369-C), this protein is Small ribosomal subunit protein uS11.